The chain runs to 547 residues: Chaperonin GroEL (547 aa).

Residues 30-33, lysine 51, 87-91, glycine 415, and aspartate 496 contribute to the ATP site; these read TLGP and DGTTT.

This sequence belongs to the chaperonin (HSP60) family. As to quaternary structure, forms a cylinder of 14 subunits composed of two heptameric rings stacked back-to-back. Interacts with the co-chaperonin GroES.

The protein resides in the cytoplasm. The enzyme catalyses ATP + H2O + a folded polypeptide = ADP + phosphate + an unfolded polypeptide.. In terms of biological role, together with its co-chaperonin GroES, plays an essential role in assisting protein folding. The GroEL-GroES system forms a nano-cage that allows encapsulation of the non-native substrate proteins and provides a physical environment optimized to promote and accelerate protein folding. The polypeptide is Chaperonin GroEL (Actinobacillus pleuropneumoniae serotype 5b (strain L20)).